The chain runs to 1381 residues: DNA-directed RNA polymerase subunit beta'' (1381 aa).

Zn(2+) contacts are provided by C220, C293, C300, and C303.

Belongs to the RNA polymerase beta' chain family. RpoC2 subfamily. In terms of assembly, in plastids the minimal PEP RNA polymerase catalytic core is composed of four subunits: alpha, beta, beta', and beta''. When a (nuclear-encoded) sigma factor is associated with the core the holoenzyme is formed, which can initiate transcription. Requires Zn(2+) as cofactor.

Its subcellular location is the plastid. It localises to the chloroplast. The catalysed reaction is RNA(n) + a ribonucleoside 5'-triphosphate = RNA(n+1) + diphosphate. In terms of biological role, DNA-dependent RNA polymerase catalyzes the transcription of DNA into RNA using the four ribonucleoside triphosphates as substrates. The sequence is that of DNA-directed RNA polymerase subunit beta'' from Draba nemorosa (Woodland whitlowgrass).